The following is a 366-amino-acid chain: Histidinol-phosphate aminotransferase 2 (366 aa).

The interval 1–21 is disordered; the sequence is MQVKDQLSLLQPYKPGKSPEQ. K222 carries the post-translational modification N6-(pyridoxal phosphate)lysine.

Belongs to the class-II pyridoxal-phosphate-dependent aminotransferase family. Histidinol-phosphate aminotransferase subfamily. In terms of assembly, homodimer. Pyridoxal 5'-phosphate is required as a cofactor.

The enzyme catalyses L-histidinol phosphate + 2-oxoglutarate = 3-(imidazol-4-yl)-2-oxopropyl phosphate + L-glutamate. It functions in the pathway amino-acid biosynthesis; L-histidine biosynthesis; L-histidine from 5-phospho-alpha-D-ribose 1-diphosphate: step 7/9. The protein is Histidinol-phosphate aminotransferase 2 of Bacillus cereus (strain ZK / E33L).